A 201-amino-acid chain; its full sequence is Probable nicotinate-nucleotide adenylyltransferase (201 aa).

This sequence belongs to the NadD family.

The catalysed reaction is nicotinate beta-D-ribonucleotide + ATP + H(+) = deamido-NAD(+) + diphosphate. It participates in cofactor biosynthesis; NAD(+) biosynthesis; deamido-NAD(+) from nicotinate D-ribonucleotide: step 1/1. Functionally, catalyzes the reversible adenylation of nicotinate mononucleotide (NaMN) to nicotinic acid adenine dinucleotide (NaAD). The chain is Probable nicotinate-nucleotide adenylyltransferase from Carboxydothermus hydrogenoformans (strain ATCC BAA-161 / DSM 6008 / Z-2901).